A 489-amino-acid polypeptide reads, in one-letter code: Nitrogenase molybdenum-iron protein alpha chain (489 aa).

The [8Fe-7S] cluster site is built by Cys-71, Cys-97, and Cys-163. Cys-284 and His-451 together coordinate [7Fe-Mo-9S-C-homocitryl] cluster.

This sequence belongs to the NifD/NifK/NifE/NifN family. In terms of assembly, tetramer of two alpha and two beta chains. Forms complex with the iron protein (nitrogenase component 2). Requires [8Fe-7S] cluster as cofactor. [7Fe-Mo-9S-C-homocitryl] cluster is required as a cofactor.

The enzyme catalyses N2 + 8 reduced [2Fe-2S]-[ferredoxin] + 16 ATP + 16 H2O = H2 + 8 oxidized [2Fe-2S]-[ferredoxin] + 2 NH4(+) + 16 ADP + 16 phosphate + 6 H(+). This molybdenum-iron protein is part of the nitrogenase complex that catalyzes the key enzymatic reactions in nitrogen fixation. The sequence is that of Nitrogenase molybdenum-iron protein alpha chain (nifD) from Acidithiobacillus ferridurans.